The sequence spans 55 residues: Omega-ctenitoxin-Pr2a (55 aa).

Disulfide bonds link Cys-2–Cys-16, Cys-9–Cys-22, Cys-15–Cys-37, Cys-24–Cys-35, and Cys-45–Cys-52.

As to expression, expressed by the venom gland.

It is found in the secreted. In terms of biological role, antagonist of L-type calcium channels (Cav1/CACNA1). In vivo, causes paralysis in posterior limbs, and gradual decrease in movement and aggression during 24 hours after intracerebroventricular injection in mice at dose levels of 3 ug per mouse. This Phoneutria reidyi (Brazilian Amazonian armed spider) protein is Omega-ctenitoxin-Pr2a.